The primary structure comprises 565 residues: MEPKTKKQRSLYIPYAGPVLLEFPLLNKGSAFSMEERRNFNLLGLLPEVVETIEEQAERAWIQYQGFKTEIDKHIYLRNIQDTNETLFYRLVNNHLDEMMPVIYTPTVGAACERFSEIYRRSRGVFISYQNRHNMDDILQNVPNHNIKVIVVTDGERILGLGDQGIGGMGIPIGKLSLYTACGGISPAYTLPVVLDVGTNNQQLLNDPLYMGWRNPRITDDEYYEFVDEFIQAVKQRWPDVLLQFEDFAQKNAMPLLNRYRNEICSFNDDIQGTAAVTVGTLIAASRAAGGQLSEKKIVFLGAGSAGCGIAEMIISQTQREGLSEEAARQKVFMVDRFGLLTDKMPNLLPFQTKLVQKRENLSDWDTDSDVLSLLDVVRNVKPDILIGVSGQTGLFTEEIIREMHKHCPRPIVMPLSNPTSRVEATPQDIIAWTEGNALVATGSPFNPVVWKDKIYPIAQCNNAFIFPGIGLGVIASGASRITDEMLMSASETLAQYSPLVLNGEGLVLPELKDIQKVSRAIAFAVGKMAQQQGVAVKTSAEALQQAIDDNFWQAEYRDYRRTSI.

Y104 functions as the Proton donor in the catalytic mechanism. R157 is an NAD(+) binding site. K175 serves as the catalytic Proton acceptor. E246, D247, and D270 together coordinate a divalent metal cation. NAD(+) contacts are provided by D270 and N418.

This sequence belongs to the malic enzymes family. Homotetramer. Mg(2+) serves as cofactor. Requires Mn(2+) as cofactor.

The enzyme catalyses (S)-malate + NAD(+) = pyruvate + CO2 + NADH. It catalyses the reaction oxaloacetate + H(+) = pyruvate + CO2. The chain is NAD-dependent malic enzyme from Escherichia coli O139:H28 (strain E24377A / ETEC).